A 616-amino-acid polypeptide reads, in one-letter code: MIENKIEQNCALHTNKNLEFLCLDCKLIPCCTLCISRGGEHHRHGIDSLESIQTSSILSMMNSFKDVYPKVIERIENDQQILKDSDEIFNEIQSQYNKNKITLNQEFKKIHNILSILELDIERQLTTDFEINTLINTTITSSINNDIDNYNKNKNNNSITDILNISIKNIQQYNDDDYYKIDSNSIELIKQYQQSLLLLNNNNNIDNLNKLKEYNNQTIKFDNQIINDIRSNLKLIYSFENNNNNNNNNNNNNNNNNNNNNNNNNNNNNKKTEKLNIEIDENNFKFIKKQNKKYYIYSENNEFPKNEERIAFGEGCGSLLKVNWNKNLKNVMLLDGFEESLEPGILPDGIVHLEIFDIKTELAVGSIPSTVTSLTFNDGFNQSIEVGIIPSSVIYLDLHDIKQPLKIGSIPQSVQDLKLCNGFSQPLEPGIITNKIKTLSIHEIKTQLQIGSIPNSVTHMVFYDGFNQLLSAGIIPEGVSWLFFFNIKIPLVVGSIPQSIYYLVFSDGFNQTISPGIITNGVEILCLRDIKQPLEVNSIPKSVTNLLIDSGFQQPLTPGIIPNSIKELALGNIKTQLVEGSIPKKIQKIILDKNFNQSLEICDLDKSVEIRTNYLK.

Residues 239-274 (FENNNNNNNNNNNNNNNNNNNNNNNNNNNNNKKTEK) adopt a coiled-coil conformation. Over residues 241-269 (NNNNNNNNNNNNNNNNNNNNNNNNNNNNN) the composition is skewed to low complexity. The interval 241–270 (NNNNNNNNNNNNNNNNNNNNNNNNNNNNNK) is disordered. FNIP repeat units follow at residues 337 to 379 (FEES…FNDG), 380 to 421 (FNQS…KLCN), 423 to 464 (FSQP…VFYD), 466 to 508 (FNQL…FSDG), 509 to 550 (FNQT…LIDS), and 552 to 593 (FQQP…ILDK).

The polypeptide is FNIP repeat-containing protein DDB_G0290639 (Dictyostelium discoideum (Social amoeba)).